Reading from the N-terminus, the 158-residue chain is C-type lectin galactose-binding isoform (158 aa).

Residues 1-23 (MGRFLLVTLSLLVVAFSLNGANS) form the signal peptide. Cystine bridges form between Cys26/Cys37, Cys54/Cys154, and Cys129/Cys146. In terms of domain architecture, C-type lectin spans 33–155 (RNGFCYKVFN…CTALRPFLCQ (123 aa)). Ca(2+)-binding residues include Gln119, Asp121, and Glu127. Positions 119–121 (QPD) match the Galactose-binding motif. An N-linked (GlcNAc...) asparagine glycan is attached at Asn134. Ca(2+)-binding residues include Asn142 and Asp143.

Belongs to the true venom lectin family. Homodimer; disulfide-linked. Expressed by the venom gland.

It is found in the secreted. In terms of biological role, galactose-binding lectin that binds to and agglutinates erythrocytes in a calcium-dependent manner. This is C-type lectin galactose-binding isoform from Pseudechis porphyriacus (Red-bellied black snake).